Reading from the N-terminus, the 208-residue chain is Ribosomal RNA small subunit methyltransferase G (208 aa).

S-adenosyl-L-methionine-binding positions include G74, L79, V125–E126, and R140.

Belongs to the methyltransferase superfamily. RNA methyltransferase RsmG family.

Its subcellular location is the cytoplasm. It catalyses the reaction guanosine(527) in 16S rRNA + S-adenosyl-L-methionine = N(7)-methylguanosine(527) in 16S rRNA + S-adenosyl-L-homocysteine. Functionally, specifically methylates the N7 position of guanine in position 527 of 16S rRNA. This chain is Ribosomal RNA small subunit methyltransferase G, found in Shewanella denitrificans (strain OS217 / ATCC BAA-1090 / DSM 15013).